The following is a 273-amino-acid chain: Ribosomal RNA small subunit methyltransferase A (273 aa).

S-adenosyl-L-methionine is bound by residues asparagine 18, leucine 20, glycine 45, glutamate 66, aspartate 91, and asparagine 113.

It belongs to the class I-like SAM-binding methyltransferase superfamily. rRNA adenine N(6)-methyltransferase family. RsmA subfamily.

The protein localises to the cytoplasm. It catalyses the reaction adenosine(1518)/adenosine(1519) in 16S rRNA + 4 S-adenosyl-L-methionine = N(6)-dimethyladenosine(1518)/N(6)-dimethyladenosine(1519) in 16S rRNA + 4 S-adenosyl-L-homocysteine + 4 H(+). In terms of biological role, specifically dimethylates two adjacent adenosines (A1518 and A1519) in the loop of a conserved hairpin near the 3'-end of 16S rRNA in the 30S particle. May play a critical role in biogenesis of 30S subunits. This Salmonella schwarzengrund (strain CVM19633) protein is Ribosomal RNA small subunit methyltransferase A.